The following is a 595-amino-acid chain: Probable serine/threonine-protein kinase KIN1 homolog (595 aa).

Residues 67-316 enclose the Protein kinase domain; sequence YKLIKTLGKG…LENVKKSKWT (250 aa). Residues 73 to 81 and K96 each bind ATP; that span reads LGKGSCAKV. The active-site Proton acceptor is the D188.

This sequence belongs to the protein kinase superfamily. CAMK Ser/Thr protein kinase family. NIM1 subfamily.

It is found in the cytoplasm. Its subcellular location is the cell membrane. The enzyme catalyses L-seryl-[protein] + ATP = O-phospho-L-seryl-[protein] + ADP + H(+). The catalysed reaction is L-threonyl-[protein] + ATP = O-phospho-L-threonyl-[protein] + ADP + H(+). Functionally, serine/threonine protein kinase involved in regulation of exocytosis. This Enterocytozoon bieneusi (strain H348) (Microsporidian parasite) protein is Probable serine/threonine-protein kinase KIN1 homolog (KIN1).